Here is a 211-residue protein sequence, read N- to C-terminus: uncharacterized protein (211 aa).

The next 3 helical transmembrane spans lie at 22 to 42, 111 to 131, and 133 to 153; these read FINF…GLKV, IIGA…WFPV, and GMAG…FMIT.

This sequence to E.coli YkgB. The protein to H.influenzae HI_0219.

The protein localises to the cell membrane. This is an uncharacterized protein from Mannheimia haemolytica (Pasteurella haemolytica).